The primary structure comprises 223 residues: Imidazoleglycerol-phosphate dehydratase (223 aa).

The protein belongs to the imidazoleglycerol-phosphate dehydratase family.

The enzyme catalyses D-erythro-1-(imidazol-4-yl)glycerol 3-phosphate = 3-(imidazol-4-yl)-2-oxopropyl phosphate + H2O. Its pathway is amino-acid biosynthesis; L-histidine biosynthesis; L-histidine from 5-phospho-alpha-D-ribose 1-diphosphate: step 6/9. The chain is Imidazoleglycerol-phosphate dehydratase (HIS3) from Torulaspora delbrueckii (Yeast).